A 342-amino-acid chain; its full sequence is Anthranilate phosphoribosyltransferase (342 aa).

Residues Gly-79, 82-83, Thr-87, 89-92, 107-115, and Ser-119 contribute to the 5-phospho-alpha-D-ribose 1-diphosphate site; these read GD, NVST, and KHGNRAATS. Gly-79 lines the anthranilate pocket. Ser-91 lines the Mg(2+) pocket. Asn-110 contacts anthranilate. An anthranilate-binding site is contributed by Arg-165. 2 residues coordinate Mg(2+): Asp-224 and Glu-225.

Belongs to the anthranilate phosphoribosyltransferase family. As to quaternary structure, homodimer. Mg(2+) is required as a cofactor.

The enzyme catalyses N-(5-phospho-beta-D-ribosyl)anthranilate + diphosphate = 5-phospho-alpha-D-ribose 1-diphosphate + anthranilate. It functions in the pathway amino-acid biosynthesis; L-tryptophan biosynthesis; L-tryptophan from chorismate: step 2/5. In terms of biological role, catalyzes the transfer of the phosphoribosyl group of 5-phosphorylribose-1-pyrophosphate (PRPP) to anthranilate to yield N-(5'-phosphoribosyl)-anthranilate (PRA). This is Anthranilate phosphoribosyltransferase from Rubrobacter xylanophilus (strain DSM 9941 / JCM 11954 / NBRC 16129 / PRD-1).